Reading from the N-terminus, the 473-residue chain is Nitrogenase vanadium-iron protein alpha chain (473 aa).

The [8Fe-7S] cluster site is built by Cys49, Cys74, and Cys137. Cys256 and His422 together coordinate [7Fe-V-9S-C-homocitryl] cluster.

Belongs to the NifD/NifK/NifE/NifN family. Hexamer of two alpha, two beta, and two delta chains. Requires [8Fe-7S] cluster as cofactor. It depends on [7Fe-V-9S-C-homocitryl] cluster as a cofactor.

It carries out the reaction N2 + 8 reduced [2Fe-2S]-[ferredoxin] + 16 ATP + 16 H2O = H2 + 8 oxidized [2Fe-2S]-[ferredoxin] + 2 NH4(+) + 16 ADP + 16 phosphate + 6 H(+). In terms of biological role, this vanadium-iron protein is part of the nitrogenase complex that catalyzes the key enzymatic reactions in nitrogen fixation. In Azotobacter chroococcum mcd 1, this protein is Nitrogenase vanadium-iron protein alpha chain (vnfD).